Reading from the N-terminus, the 93-residue chain is Phosphoribosyl-ATP pyrophosphatase (93 aa).

This sequence belongs to the PRA-PH family.

The protein localises to the cytoplasm. The enzyme catalyses 1-(5-phospho-beta-D-ribosyl)-ATP + H2O = 1-(5-phospho-beta-D-ribosyl)-5'-AMP + diphosphate + H(+). It functions in the pathway amino-acid biosynthesis; L-histidine biosynthesis; L-histidine from 5-phospho-alpha-D-ribose 1-diphosphate: step 2/9. This chain is Phosphoribosyl-ATP pyrophosphatase, found in Corynebacterium aurimucosum (strain ATCC 700975 / DSM 44827 / CIP 107346 / CN-1) (Corynebacterium nigricans).